The sequence spans 795 residues: Glutamine--tRNA ligase, cytoplasmic (795 aa).

The interval 188–220 is disordered; sequence ADNEKPTKKKEKKEKPAKVEEKKAVVETTAEPS. The segment covering 200-212 has biased composition (basic and acidic residues); it reads KEKPAKVEEKKAV. A 'HIGH' region motif is present at residues 277–287; that stretch reads PEPNGYLHIGH. ATP is bound by residues 278–280 and 284–290; these read EPN and HIGHAKA. The L-glutamine site is built by Asp310 and Tyr450. ATP is bound by residues Thr469, 498–499, and 506–508; these read RL and MSK. A 'KMSKS' region motif is present at residues 505–509; sequence VMSKR.

The protein belongs to the class-I aminoacyl-tRNA synthetase family.

It localises to the cytoplasm. The protein resides in the cytosol. It catalyses the reaction tRNA(Gln) + L-glutamine + ATP = L-glutaminyl-tRNA(Gln) + AMP + diphosphate. This Arabidopsis thaliana (Mouse-ear cress) protein is Glutamine--tRNA ligase, cytoplasmic.